The primary structure comprises 230 residues: 7-cyano-7-deazaguanine synthase (230 aa).

An ATP-binding site is contributed by 7-17; sequence CSGGLDSVSLA. Cys185, Cys193, Cys196, and Cys199 together coordinate Zn(2+).

This sequence belongs to the QueC family. It depends on Zn(2+) as a cofactor.

The enzyme catalyses 7-carboxy-7-deazaguanine + NH4(+) + ATP = 7-cyano-7-deazaguanine + ADP + phosphate + H2O + H(+). It participates in purine metabolism; 7-cyano-7-deazaguanine biosynthesis. Catalyzes the ATP-dependent conversion of 7-carboxy-7-deazaguanine (CDG) to 7-cyano-7-deazaguanine (preQ(0)). This chain is 7-cyano-7-deazaguanine synthase, found in Ruegeria pomeroyi (strain ATCC 700808 / DSM 15171 / DSS-3) (Silicibacter pomeroyi).